The chain runs to 231 residues: 5'-methylthioadenosine/S-adenosylhomocysteine nucleosidase (231 aa).

E12 acts as the Proton acceptor in catalysis. Substrate is bound by residues G78, I153, and 174–175; that span reads ME. D198 (proton donor) is an active-site residue.

It belongs to the PNP/UDP phosphorylase family. MtnN subfamily.

The enzyme catalyses S-adenosyl-L-homocysteine + H2O = S-(5-deoxy-D-ribos-5-yl)-L-homocysteine + adenine. The catalysed reaction is S-methyl-5'-thioadenosine + H2O = 5-(methylsulfanyl)-D-ribose + adenine. It catalyses the reaction 5'-deoxyadenosine + H2O = 5-deoxy-D-ribose + adenine. It participates in amino-acid biosynthesis; L-methionine biosynthesis via salvage pathway; S-methyl-5-thio-alpha-D-ribose 1-phosphate from S-methyl-5'-thioadenosine (hydrolase route): step 1/2. In terms of biological role, catalyzes the irreversible cleavage of the glycosidic bond in both 5'-methylthioadenosine (MTA) and S-adenosylhomocysteine (SAH/AdoHcy) to adenine and the corresponding thioribose, 5'-methylthioribose and S-ribosylhomocysteine, respectively. Also cleaves 5'-deoxyadenosine, a toxic by-product of radical S-adenosylmethionine (SAM) enzymes, into 5-deoxyribose and adenine. The polypeptide is 5'-methylthioadenosine/S-adenosylhomocysteine nucleosidase (Maridesulfovibrio salexigens (strain ATCC 14822 / DSM 2638 / NCIMB 8403 / VKM B-1763) (Desulfovibrio salexigens)).